Here is a 150-residue protein sequence, read N- to C-terminus: UPF0260 protein VIBHAR_03078 (150 aa).

Belongs to the UPF0260 family.

This is UPF0260 protein VIBHAR_03078 from Vibrio campbellii (strain ATCC BAA-1116).